The sequence spans 181 residues: Insulin-like growth factor 2 (181 aa).

The N-terminal stretch at 1–24 (MGIPVGKSLLMLFTFLAFASCCIA) is a signal peptide. Residues 25-52 (AYRPSETLCGGELVDTLQFVCGDRGFYF) form a b region. Intrachain disulfides connect cysteine 33–cysteine 71, cysteine 45–cysteine 84, and cysteine 70–cysteine 75. The segment at 53–64 (SRPASRINRRSR) is c. The interval 65-85 (GIVEECCFRSCDLALLETYCA) is a. The interval 86 to 91 (TPAKSE) is d. A propeptide spans 92-181 (RDVSTPPTVL…AFVEVSSDLQ (90 aa)) (e peptide). O-linked (GalNAc...) threonine glycosylation occurs at threonine 163.

Belongs to the insulin family. As to quaternary structure, interacts with MYORG; this interaction is required for IGF2 secretion. Interacts with integrins ITGAV:ITGB3 and ITGA6:ITGB4; integrin-binding is required for IGF2 signaling. Interacts with IGFBP2. Proteolytically processed by PCSK4, proIGF2 is cleaved at Arg-128 and Arg-92 to generate big-IGF2 and mature IGF2.

It is found in the secreted. In terms of biological role, the insulin-like growth factors possess growth-promoting activity. Major fetal growth hormone in mammals. Plays a key role in regulating fetoplacental development. IGF2 is influenced by placental lactogen. Also involved in tissue differentiation. In adults, involved in glucose metabolism in adipose tissue, skeletal muscle and liver. Acts as a ligand for integrin which is required for IGF2 signaling. Positively regulates myogenic transcription factor MYOD1 function by facilitating the recruitment of transcriptional coactivators, thereby controlling muscle terminal differentiation. Inhibits myoblast differentiation and modulates metabolism via increasing the mitochondrial respiration rate. Its function is as follows. Preptin undergoes glucose-mediated co-secretion with insulin, and acts as a physiological amplifier of glucose-mediated insulin secretion. Exhibits osteogenic properties by increasing osteoblast mitogenic activity through phosphoactivation of MAPK1 and MAPK3. This Equus caballus (Horse) protein is Insulin-like growth factor 2.